Here is a 1563-residue protein sequence, read N- to C-terminus: MDDPSMMPDLSHLSAEEREIIENVFKRQKDEEAKETQISQKASEELSELDKQITERKETSKKLVGTQDDAICQICQKTKFADGIGHKCFYCQLRSCARCGGRAQSKNKAIWACSLCQKRQQILAKTGKWFQPEEQPQPKISGSEPSPSPQPLTDDNVPEPQQRRAEPPDKMNTPNYQNNQQPRGMGMQPNHNQTQQNFMNQNQNSNQHPNQNHNQNQMQNPHQNQNHVQNNHQGANNHQQNNRRAMQQQPMSQNQANQINQMNQNQNQQQSHNQNMTQNQRNQTGPQNQQRTNDSRTMKQTPQQQPSQYQNNVGAAHQHHNQHGQQEQHHQQMNEQRTDNNRMRENTNGQGGMFNRQPSLEQTTPMNKYNHVEDDGMNQRPTFYTGNSENDQRQFDGQMQQGSQQNNQNQNQNNRNLRKNTVSRVTEEDYASSSNFESKKQRNNSSQSQSNTQGVRACPSTDDHLNRVKNRLHRQLRSMSSSEEDIIAGGGGNTLKMSTSAVVASGGKTAFHDDMGASNVQRLSEECNSEKDLLRYIYGDHKNSDSSSLGAGVGGSGGGGVLSGNSVLKSKSHALLKGSYQGGLDMQANRRRDKSLSLSPSRNDHFGTGSISGGDLLASRIRTFLSHPVTWQPSADQKKLIGHMILHRTENSAANGDLGLKIVGGRRTDTGKLGAFITQVKPGSVADTIGRLRPGDEVVEWNGQSLQNATYEQVYDSIAASRYDTSVELIVSRSAIIPGGDDFLNLTPSQMSSSAYSRVPSAYPSQFQRQLPNPDLFLDIHPALQQLSLPHSQSAVFPHNNTLTSRNRSTSSYYYSDVPDLGVPSNREMQESQAFGTGHIFGRIEVSFVYSHHDRQLSVALVRGFDLPPRSDGTPRNPYVKIFLLPDRSEKSRRQSAVIAETLMPVWDEVFYYNGLTEPMLLQRVLELTVWDYDKFGTNSFLGETLIDLASVPLDGEHSLMCILVDMDDDNPLRTVISIFKFHVIILTFLQRLKLRKASYNAPTRRPQSELNYYDHSSNYYDHISQNIDKQPHHHHLAPNDEENDEYIDDDELENDIDLATGGGARKSRTYRREKGMHGGHGYADWTQNHQRQSGYTSDHGYGRQNMIGRAYNRRQQRRPRSATALSQMEREDMYDPTRKHRDDNEYSMRESVRHGSQYYLGDQPLYEDGRYKISQGQMTPKQHNQQHQPHPLSQAHQQQQTAGVQPQHHQGFQQQQHPQQPNQQMQQMQPPMPNQGYYSDGSETLSVHSTNSMPTTMTTVNRRNMNANNTSNDNTSFAETPTANTNRVPIKETKQNSLASSSSVAGGGSAANNVMKERKKSLMTRFIPGRGAEGKRTGFARSEEVGIPGNLSSDRLTEPTPPFLKQASKESTDSAHSDKFARQCWLPVLADGPLGTFVDNLGPGQVVGRQVLASPVLGEIQIALMAGRSGIDVEIIKAKNLVVKPGVKVCPAPYVKVYLMEGKQCIAKAKTNAATKTTSPLFQQHLIFNDSPKKKTLQVTVLGDYGRMERKVFMGISQIRLEDLELGSQPLIGWYKLFHSSSLAGTGPVRKDSDVSVGGAQQ.

A RabBD domain is found at 7–133 (MPDLSHLSAE…AKTGKWFQPE (127 aa)). Positions 25 to 35 (FKRQKDEEAKE) are enriched in basic and acidic residues. The interval 25 to 50 (FKRQKDEEAKETQISQKASEELSELD) is disordered. Residues 66-121 (TQDDAICQICQKTKFADGIGHKCFYCQLRSCARCGGRAQSKNKAIWACSLCQKRQQ) form an FYVE-type zinc finger. Residues C72, C75, C88, C91, C96, C99, C113, and C116 each coordinate Zn(2+). 2 disordered regions span residues 128–466 (KWFQ…DHLN) and 582–605 (GGLDMQANRRRDKSLSLSPSRNDH). Over residues 172-182 (NTPNYQNNQQP) the composition is skewed to polar residues. Low complexity-rich tracts occupy residues 190–284 (NHNQ…RNQT) and 300–316 (QTPQQQPSQYQNNVGAA). The segment covering 326–345 (QEQHHQQMNEQRTDNNRMRE) has biased composition (basic and acidic residues). Polar residues-rich tracts occupy residues 356–367 (RQPSLEQTTPMN) and 379–389 (QRPTFYTGNSE). The segment covering 395–415 (FDGQMQQGSQQNNQNQNQNNR) has biased composition (low complexity). The region spanning 643–733 (HMILHRTENS…DTSVELIVSR (91 aa)) is the PDZ domain. In terms of domain architecture, C2 1 spans 840–962 (IFGRIEVSFV…PLDGEHSLMC (123 aa)). Disordered regions lie at residues 1054–1163 (ENDI…YLGD), 1177–1311 (GQMT…GGSA), and 1346–1373 (VGIPGNLSSDRLTEPTPPFLKQASKEST). The segment covering 1086–1097 (WTQNHQRQSGYT) has biased composition (polar residues). Residues 1112-1121 (YNRRQQRRPR) are compositionally biased toward basic residues. Over residues 1129–1154 (MEREDMYDPTRKHRDDNEYSMRESVR) the composition is skewed to basic and acidic residues. Residues 1181–1230 (PKQHNQQHQPHPLSQAHQQQQTAGVQPQHHQGFQQQQHPQQPNQQMQQMQ) show a composition bias toward low complexity. Over residues 1242-1255 (GSETLSVHSTNSMP) the composition is skewed to polar residues. The span at 1256–1277 (TTMTTVNRRNMNANNTSNDNTS) shows a compositional bias: low complexity. The span at 1278–1288 (FAETPTANTNR) shows a compositional bias: polar residues. The span at 1297–1311 (NSLASSSSVAGGGSA) shows a compositional bias: low complexity. Residues 1417-1536 (VLGEIQIALM…LGSQPLIGWY (120 aa)) form the C2 2 domain.

In terms of tissue distribution, restricted to discrete puncta in synapse-rich regions of the nervous system including the nerve ring, the ventral nerve cord and the dorsal nerve cord. Localized expression was found in the head.

It localises to the synapse. In terms of biological role, regulates the efficiency of a post-docking step of the release pathway. Acts after vesicle docking likely via regulating priming. May regulate the conformational changes in syntaxin. Binding of vesicles via rab-3[GTP] to Rim may signal the presence of a docked synaptic vesicle. Rim may then signal to unc-13 to change the conformation of syntaxin from the closed to the open state. Syntaxin could then engage synaptobrevin on the docked vesicle to form SNARE complexes and to prime the vesicle for release. Not required for the development or the structural organization of synapses. May play a role in regulating entry into the dauer state. This Caenorhabditis elegans protein is Rab-3-interacting molecule unc-10.